We begin with the raw amino-acid sequence, 359 residues long: DNA replication and repair protein RecF (359 aa).

30–37 (GPNGSGKT) contributes to the ATP binding site.

Belongs to the RecF family.

Its subcellular location is the cytoplasm. Its function is as follows. The RecF protein is involved in DNA metabolism; it is required for DNA replication and normal SOS inducibility. RecF binds preferentially to single-stranded, linear DNA. It also seems to bind ATP. This chain is DNA replication and repair protein RecF, found in Psychromonas ingrahamii (strain DSM 17664 / CCUG 51855 / 37).